The primary structure comprises 533 residues: Nitrogen fixation protein AnfA (533 aa).

The segment at 33–193 (ILYKISQIIT…PLVELYLIEN (161 aa)) is a domain. One can recognise a GAF domain in the interval 46 to 186 (DLADALSIVL…MIATMIAPLV (141 aa)). Positions 219–448 (IIGNSKPMQE…LENVMERAVI (230 aa)) constitute a Sigma-54 factor interaction domain. ATP is bound by residues 247-254 (GESGVGKE) and 310-319 (ADGGTIFLDE). The H-T-H motif DNA-binding region spans 501-520 (IGEAAKELGLARRMLGVRME).

In terms of biological role, anfA is essential for nitrogen fixation under Mo- and V-deficient conditions. It is required for the regulation of nitrogenase 3 transcription. Interacts with sigma-54. The protein is Nitrogen fixation protein AnfA (anfA) of Azotobacter vinelandii.